A 317-amino-acid chain; its full sequence is ADIPOR-like receptor IZH2 (317 aa).

The Cytoplasmic portion of the chain corresponds to 1–78; sequence MSTLLERTKS…TFKSLFYLHN (78 aa). Residues 79–99 traverse the membrane as a helical segment; it reads ESVNIYSHLIPALGFFTVLLL. At 100-110 the chain is on the extracellular side; it reads DKSTIKVFATT. Residues 111–131 traverse the membrane as a helical segment; the sequence is TWLDHMVIDLFYSGAFACLIL. The Cytoplasmic segment spans residues 132 to 153; that stretch reads SSSFHCLKSHSLRIATLGNKLD. Residues 154-174 form a helical membrane-spanning segment; sequence YLGICILIVTSMVSILYYGYF. The Extracellular segment spans residues 175–176; sequence EK. The helical transmembrane segment at 177-197 threads the bilayer; the sequence is FSLFCLFALITVSFGIACSIV. The Cytoplasmic portion of the chain corresponds to 198–212; sequence SLKDKFRKREWRPYR. A helical transmembrane segment spans residues 213-233; it reads AGLFVCFGLSSIIPIFSGLYC. The Extracellular portion of the chain corresponds to 234-242; it reads YSFSEIWTQ. Residues 243–263 traverse the membrane as a helical segment; it reads IQLFWVLLGGVLYIIGAVLYG. Residues 264–276 are Cytoplasmic-facing; sequence MRFPEKICPGKFD. The chain crosses the membrane as a helical span at residues 277-297; that stretch reads IWGHSHQLFHFLVVIAALCHL. Residues 298-317 lie on the Extracellular side of the membrane; sequence RGLLNSYELVHIKMENGIVS.

This sequence belongs to the ADIPOR family.

The protein resides in the membrane. Its function is as follows. Probable receptor, which is involved in metabolic pathways that regulate lipid metabolism such as fatty acid oxidation. This chain is ADIPOR-like receptor IZH2 (IZH2), found in Saccharomyces cerevisiae (strain ATCC 204508 / S288c) (Baker's yeast).